The chain runs to 1527 residues: MADDGGPFPLSSSLLHASSSTTILESSSSSLLATSSPAIAATFSSFSGRPSSYLPPPPLPPPAPSTMVGWIGWVFSFVFQVIPSILYWAITFCTITLPTWLFTLFSMSLTFTMNFTTLLLIALAIVSTVSWFIRYRFLNMYSRLPPEPQRKEPQLDLFPDVQEGDSKPGLANYLDEFLSAIKVFGYLERPVFHELTRTMQTRKLIAGETLLLEEEKGFCLVVDGLVQIFVKSIRDGKSPADHELNLAGDDSTDEEGQNVDGRQGYQLLTEVKNGASMSSLFSILSLFTEDIQLRTSESLSSSVSSVGPNLARVPDSSPSSPRGLVHSPVPVREPSESGHNLPTNGEFLPTVPPLHLEESRGTPDHDHQPESRTRPGKKRRKSVHPDIVARAMVDTTIAIIPASAFRRLTRVYPRATAHIVQVILTRLQRVTFATAHSYLGLTNEVLGIEKQMTKFTTYDLPNDMRGAALDRLKDKFIKERDRLGHEEVTKGIALHNPSAGRRRRSSSFLRKEAALQARMATTPRRPTATGSQENMSFHDRDAAGVSPGDLLSTIQLSRFGPRYEHLAPKIYSPLAEKEQSPFRPPTMRGPASPFHRKESLDEDALFRESILDCIMKALGLTSSTRDILRKSSHNSGDASPKLLSYDSRRQKAVFSNNAFGFIDPYEGSVDGETESMMSMSVTSAGGTSPIVNLREELRNDIEIVYFPQGSVLVEQGERHPGLYYVIDGFLDVGMPACDKGDDLVGATRPAHGEEAFPTLKRTTTASSRTSSVAPGGSDSKRRRQSRKSLYLIKPGGIQGYVGSVASYRSYTDVLAKTDVYVGFLPRASLERIAERYPIALLTLAKRLTSLLPRLLLHIDFALEWVQVNAGQVIYHQGDESDAIYLVLNGRLRSVLEGTDGKMNVVGEYGQGESVGELEVMTESTRPATLHAIRDTELAKFPRSLFNSLAQEHPGITIQVSKLIAQRMRDLVERPMTEKGAEHGAGSIKTATSTVNLRTVSILPVTAGVPVVEFGHRLLNALHQIGVTNGVTSLNQAAILNHLGRHAFTKMGKLKLSQYLADLEEKYGMVLYIADTNVNSPWTQTCITQADCILLVGLAESTPSIGEYERFLLGMKTTSRKELVLLHADRYCPPGLTRRWLKNRVWINGGHHHIQMGFRLTAEPSHPQTKRFGTVLKERVQVIQAEIQKYTSRRIHQTALYSAQTPFKGDFHRLARRLCGRSVGLVLGGGGARGIAQVGVIKALEEAGIPIDIIGGTSIGAFNGALYARDADVVPMYGRAKKFAGRMGSMWRFALDLTYPTVSYTTGHEFNRGIFKTFGDSQIEDFWLEFYCNTTNISKSRPEYHSSGYVWRYVRASMTLAGLIPPICDEGSMLLDGGYIDNLTVPHMKGLGADVIFAVDVGSIDDNTPQGYGDSLSGFWATINRWNPFSSVPNPPTLSEIQARLAYVSSFENLEQAKTTPGCLYMRPPIDPYGTLDFGKFDEIYQVGYKYGKEYLEKLKNEGTLPLREETEEKKKLQRTLAPRRASI.

At Met1 to Gly69 the chain is on the cytoplasmic side. A helical membrane pass occupies residues Trp70 to Ile90. The Lumenal portion of the chain corresponds to Thr91–Thr112. A helical transmembrane segment spans residues Met113–Ile133. Topologically, residues Arg134–Ile1527 are cytoplasmic. Disordered stretches follow at residues Ala240–Val259, Leu299–Ile387, Glu576–Arg596, and Ala750–Ser785. Positions His355–Thr373 are enriched in basic and acidic residues. Residues Gly685–Val804 and Arg846–Arg966 each bind a nucleoside 3',5'-cyclic phosphate. Low complexity predominate over residues Arg761–Ser771. Residues Leu1224–Lys1388 form the PNPLA domain. The GXGXXG motif lies at Gly1228–Gly1233. Residues Gly1255–Gly1259 carry the GXSXG motif. The active-site Nucleophile is the Ser1257. Residue Asp1375 is the Proton acceptor of the active site. A DGA/G motif is present at residues Asp1375–Gly1377.

It belongs to the NTE family.

It is found in the endoplasmic reticulum membrane. It carries out the reaction a 1-acyl-sn-glycero-3-phosphocholine + H2O = sn-glycerol 3-phosphocholine + a fatty acid + H(+). Inhibited by organophosphorus esters. Intracellular phospholipase B that catalyzes the double deacylation of phosphatidylcholine (PC) to glycerophosphocholine (GroPCho). Plays an important role in membrane lipid homeostasis. Responsible for the rapid PC turnover in response to inositol, elevated temperatures, or when choline is present in the growth medium. The chain is Lysophospholipase nte1 (nte1) from Aspergillus terreus (strain NIH 2624 / FGSC A1156).